Reading from the N-terminus, the 1339-residue chain is MSAIGTLQVLGFLLSLARGSEMGNSQAVCPGTLNGLSVTGDADNQYQTLYKLYEKCEVVMGNLEIVLTGHNADLSFLQWIREVTGYVLVAMNEFSVLPLPNLRVVRGTQVYDGKFAIFVMLNYNTNSSHALRQLRFTQLTEILLGGVYIEKNDKLCHMDTIDWRDIVRVPDAEIVVKNNGGNCPPCHEVCKGRCWGPGPEDCQILTKTICAPQCNGRCFGPNPNQCCHDECAGGCSGPQDTDCFACRHFNDSGACVPRCPAPLVYNKLTFQLEPNPHIKYQYGGVCVASCPHNFVVDQTFCVRACPADKMEVDKNGLKMCEPCRGLCPKACEGTGSGSRYQTVDSSNIDGFVNCTKILGNLDFLITGLNGDPWHKIPALDPEKLNVFRTVREITGYLNIQSWPPHMHNFSVFSNLTTIGGRSLYNRGFSLLIMKNLNVTSLGFRSLKEISAGRVYISANQQLCYHHSLNWTRLLRGPAEERLDIKYNRPLGECVAEGKVCDPLCSSGGCWGPGPGQCLSCRNYSREGVCVTHCNVLQGEPREFVHEAHCFSCHPECQPMEGTSTCNGSGSDACARCAHFRDGPHCVNSCPHGILGAKGPIYKYPDAQNECRPCHENCTQGCKGPELQDCLGQAEVLMSKPHLVIAVTVGLTVIFLILGGSFLYWRGRRIQNKRAMRRYLERGESIEPLDPSEKANKVLARIFKETELRKLKVLGSGVFGTVHKGIWIPEGESIKIPVCIKVIEDKSGRQSFQAVTDHMLAVGSLDHAHIVRLLGLCPGSSLQLVTQYLPLGSLLDHVRQHRETLGPQLLLNWGVQIAKGMYYLEEHSMVHRDLALRNVMLKSPSQVQVADFGVADLLPPDDKQLLHSEAKTPIKWMALESIHFGKYTHQSDVWSYGVTVWELMTFGAEPYAGLRLAEIPDLLEKGERLAQPQICTIDVYMVMVKCWMIDENIRPTFKELANEFTRMARDPPRYLVIKRASGPGIPPAAEPSALSTKELQDAELEPDLDLDLDVEVEEEGLATTLGSALSLPTGTLTRPRGSQSLLSPSSGYMPMNQSNLGEACLDSAVLGGREQFSRPISLHPIPRGRQTSESSEGHVTGSEAELQERVSMCRSRSRSRSPRPRGDSAYHSQRHSLLTPVTPLSPPGLEEEDGNGYVMPDTHLRGTSSSREGTLSSVGLSSVLGTEEEDEDEEYEYMNRKRRGSPARPPRPGSLEELGYEYMDVGSDLSASLGSTQSCPLHPMAIVPSAGTTPDEDYEYMNRRRGAGGSGGDYAAMGACPAAEQGYEEMRAFQGPGHQAPHVRYARLKTLRSLEATDSAFDNPDYWHSRLFPKANAQRI.

The first 19 residues, 1 to 19 (MSAIGTLQVLGFLLSLARG), serve as a signal peptide directing secretion. At 20–641 (SEMGNSQAVC…QAEVLMSKPH (622 aa)) the chain is on the extracellular side. Residue Asn-126 is glycosylated (N-linked (GlcNAc...) asparagine). 11 cysteine pairs are disulfide-bonded: Cys-186–Cys-194, Cys-190–Cys-202, Cys-210–Cys-218, Cys-214–Cys-226, Cys-227–Cys-235, Cys-231–Cys-243, Cys-246–Cys-255, Cys-259–Cys-286, Cys-290–Cys-301, Cys-305–Cys-320, and Cys-323–Cys-327. A glycan (N-linked (GlcNAc...) asparagine) is linked at Asn-250. N-linked (GlcNAc...) asparagine glycosylation is found at Asn-353, Asn-408, Asn-414, Asn-437, and Asn-469. 10 disulfides stabilise this stretch: Cys-500–Cys-509, Cys-504–Cys-517, Cys-520–Cys-529, Cys-533–Cys-549, Cys-552–Cys-565, Cys-556–Cys-573, Cys-576–Cys-585, Cys-589–Cys-610, Cys-613–Cys-621, and Cys-617–Cys-629. Residue Asn-522 is glycosylated (N-linked (GlcNAc...) asparagine). Residue Asn-566 is glycosylated (N-linked (GlcNAc...) asparagine). A glycan (N-linked (GlcNAc...) asparagine) is linked at Asn-616. A helical membrane pass occupies residues 642-662 (LVIAVTVGLTVIFLILGGSFL). Residues 663-1339 (YWRGRRIQNK…LFPKANAQRI (677 aa)) lie on the Cytoplasmic side of the membrane. Residue Ser-684 is modified to Phosphoserine. A Protein kinase domain is found at 707–964 (LRKLKVLGSG…TFKELANEFT (258 aa)). ATP is bound by residues 713–721 (LGSGVFGTV), Lys-740, 786–788 (QYL), and 832–837 (DLALRN). The active-site Proton acceptor is the Asp-832. Position 980 is a phosphoserine (Ser-980). 3 disordered regions span residues 1028 to 1052 (LSLP…SGYM), 1077 to 1156 (RPIS…GNGY), and 1181 to 1212 (SVLG…PRPG). Residues 1185 to 1195 (TEEEDEDEEYE) are compositionally biased toward acidic residues.

It belongs to the protein kinase superfamily. Tyr protein kinase family. EGF receptor subfamily. Monomer and homodimer. Heterodimer with each of the other ERBB receptors (Potential). Interacts with CSPG5, PA2G4, GRB7 and MUC1. Interacts with MYOC. Found in a ternary complex with NRG1 and ITGAV:ITGB3 or ITGA6:ITGB4. Post-translationally, autophosphorylated. Ligand-binding increases phosphorylation on tyrosine residues and promotes its association with the p85 subunit of phosphatidylinositol 3-kinase. As to expression, in the muscle, expression localizes to the synaptic sites of muscle fibers.

The protein localises to the membrane. It catalyses the reaction L-tyrosyl-[protein] + ATP = O-phospho-L-tyrosyl-[protein] + ADP + H(+). Tyrosine-protein kinase that plays an essential role as cell surface receptor for neuregulins. Binds to neuregulin-1 (NRG1) and is activated by it; ligand-binding increases phosphorylation on tyrosine residues and promotes its association with the p85 subunit of phosphatidylinositol 3-kinase. May also be activated by CSPG5. Involved in the regulation of myeloid cell differentiation. This chain is Receptor tyrosine-protein kinase erbB-3 (Erbb3), found in Mus musculus (Mouse).